The chain runs to 466 residues: Argininosuccinate lyase (466 aa).

Belongs to the lyase 1 family. Argininosuccinate lyase subfamily.

The protein localises to the cytoplasm. It carries out the reaction 2-(N(omega)-L-arginino)succinate = fumarate + L-arginine. The protein operates within amino-acid biosynthesis; L-arginine biosynthesis; L-arginine from L-ornithine and carbamoyl phosphate: step 3/3. The chain is Argininosuccinate lyase from Synechococcus elongatus (strain ATCC 33912 / PCC 7942 / FACHB-805) (Anacystis nidulans R2).